Here is a 130-residue protein sequence, read N- to C-terminus: Small ribosomal subunit protein uS8 (130 aa).

The protein belongs to the universal ribosomal protein uS8 family. Part of the 30S ribosomal subunit.

Functionally, one of the primary rRNA binding proteins, it binds directly to 16S rRNA central domain where it helps coordinate assembly of the platform of the 30S subunit. The protein is Small ribosomal subunit protein uS8 of Halobacterium salinarum (strain ATCC 29341 / DSM 671 / R1).